A 1232-amino-acid chain; its full sequence is Nitrate reductase alpha subunit (1232 aa).

Positions 53 to 117 constitute a 4Fe-4S Mo/W bis-MGD-type domain; it reads DKVVRSTHGV…SFSWYSYSPT (65 aa). The [4Fe-4S] cluster site is built by histidine 60, cysteine 64, cysteine 68, and cysteine 103. Aspartate 233 is a Mo-bis(molybdopterin guanine dinucleotide) binding site.

It belongs to the prokaryotic molybdopterin-containing oxidoreductase family. [4Fe-4S] cluster is required as a cofactor. It depends on Mo-bis(molybdopterin guanine dinucleotide) as a cofactor.

It localises to the cell membrane. The enzyme catalyses nitrate + a quinol = a quinone + nitrite + H2O. Its function is as follows. The alpha chain is the actual site of nitrate reduction. This Mycobacterium tuberculosis (strain CDC 1551 / Oshkosh) protein is Nitrate reductase alpha subunit (narG).